Consider the following 645-residue polypeptide: Glucans biosynthesis glucosyltransferase H (645 aa).

The span at 1–13 shows a compositional bias: polar residues; that stretch reads MDGTVTPSPTTTA. Positions 1–32 are disordered; that stretch reads MDGTVTPSPTTTAMPPVSALDAGTPTLPPEAP. The next 7 helical transmembrane spans lie at 64-84, 98-118, 423-443, 465-485, 504-524, 559-579, and 580-600; these read LIGG…SVLW, LFVL…AGFV, APMW…GGGI, AIWI…LGYI, AVSI…VMYL, YGGL…VSPA, and LAAW…VVAL.

Belongs to the glycosyltransferase 2 family. OpgH subfamily.

It is found in the cell inner membrane. It participates in glycan metabolism; osmoregulated periplasmic glucan (OPG) biosynthesis. Involved in the biosynthesis of osmoregulated periplasmic glucans (OPGs). This chain is Glucans biosynthesis glucosyltransferase H, found in Xanthomonas euvesicatoria pv. vesicatoria (strain 85-10) (Xanthomonas campestris pv. vesicatoria).